Reading from the N-terminus, the 523-residue chain is MSQQVIIFDTTLRDGEQALQASLSAKEKLQIALALERMGVDVMEVGFPVSSPGDFESVQTIARIIKNSRVCALARCVEKDIDVAAQALKVADAFRIHTFIATSPMHIATKLRSTLDEVIERAVYMVKRARNYTDDVEFSCEDAGRTPVNDLARVVEAAINAGARTINIPDTVGYTMPFEFARIISGLYERVPNIDNAIISVHTHDDLGLAVGNSLAAVHAGARQVEGAMNGIGERAGNCALEEVIMAIKVRKDIMNVHTNINHHEIWRTSQTVSQICNMPIPTNKAIVGSGAFAHSSGIHQDGVLKNRENYEIMTPESIGLNQVQLNLTSRSGRAAVKHRMEEMGYQESDYNLDRLYDAFLKLADKKGQVFDYDLEALAFINKQQEEPEHFRLDYFSVQSGSSDIATASVKLACGEETKAEAANGNGPVDAIYQAINRITGYDVELVKYDLNAKGQGKDALGQVDIVVNHHGRRFHGVGLATDIVESSAKAMVHVLNNIWRAAEVEKELQRKAHNKENNKEIV.

Residues 5 to 267 (VIIFDTTLRD…HTNINHHEIW (263 aa)) form the Pyruvate carboxyltransferase domain. Mn(2+)-binding residues include Asp14, His202, His204, and Asn238. The segment at 392–523 (RLDYFSVQSG…HNKENNKEIV (132 aa)) is regulatory domain.

It belongs to the alpha-IPM synthase/homocitrate synthase family. LeuA type 1 subfamily. As to quaternary structure, homodimer. Mn(2+) is required as a cofactor.

It localises to the cytoplasm. The catalysed reaction is 3-methyl-2-oxobutanoate + acetyl-CoA + H2O = (2S)-2-isopropylmalate + CoA + H(+). It functions in the pathway amino-acid biosynthesis; L-leucine biosynthesis; L-leucine from 3-methyl-2-oxobutanoate: step 1/4. In terms of biological role, catalyzes the condensation of the acetyl group of acetyl-CoA with 3-methyl-2-oxobutanoate (2-ketoisovalerate) to form 3-carboxy-3-hydroxy-4-methylpentanoate (2-isopropylmalate). This is 2-isopropylmalate synthase from Salmonella arizonae (strain ATCC BAA-731 / CDC346-86 / RSK2980).